The primary structure comprises 133 residues: Small ribosomal subunit protein uS8 (133 aa).

The protein belongs to the universal ribosomal protein uS8 family. As to quaternary structure, part of the 30S ribosomal subunit. Contacts proteins S5 and S12.

Functionally, one of the primary rRNA binding proteins, it binds directly to 16S rRNA central domain where it helps coordinate assembly of the platform of the 30S subunit. This chain is Small ribosomal subunit protein uS8, found in Syntrophus aciditrophicus (strain SB).